A 158-amino-acid chain; its full sequence is MQGTLSVWLAKRGLVHRSLGFDYQGIETLQIKPEDWHSIAVILYVYGYNYLRSQCAYDVAPGGLLASVYHLTRIEYGVNQAEEVCIKVFTHRSNSRIPSVFWVWKSADFQERESYDMLGITYDSHPRLKRILMPESWIGWPLRKDYIAPNFYEIQDAY.

Belongs to the complex I 30 kDa subunit family. As to quaternary structure, NDH is composed of at least 16 different subunits, 5 of which are encoded in the nucleus.

It localises to the plastid. The protein resides in the chloroplast thylakoid membrane. The catalysed reaction is a plastoquinone + NADH + (n+1) H(+)(in) = a plastoquinol + NAD(+) + n H(+)(out). It carries out the reaction a plastoquinone + NADPH + (n+1) H(+)(in) = a plastoquinol + NADP(+) + n H(+)(out). NDH shuttles electrons from NAD(P)H:plastoquinone, via FMN and iron-sulfur (Fe-S) centers, to quinones in the photosynthetic chain and possibly in a chloroplast respiratory chain. The immediate electron acceptor for the enzyme in this species is believed to be plastoquinone. Couples the redox reaction to proton translocation, and thus conserves the redox energy in a proton gradient. The polypeptide is NAD(P)H-quinone oxidoreductase subunit J, chloroplastic (Aethionema cordifolium (Lebanon stonecress)).